Here is a 209-residue protein sequence, read N- to C-terminus: Outer-membrane lipoprotein carrier protein (209 aa).

The N-terminal stretch at 1-21 (MKLLKLLSVAALSAASMMANA) is a signal peptide.

It belongs to the LolA family. As to quaternary structure, monomer.

Its subcellular location is the periplasm. Functionally, participates in the translocation of lipoproteins from the inner membrane to the outer membrane. Only forms a complex with a lipoprotein if the residue after the N-terminal Cys is not an aspartate (The Asp acts as a targeting signal to indicate that the lipoprotein should stay in the inner membrane). The sequence is that of Outer-membrane lipoprotein carrier protein from Hahella chejuensis (strain KCTC 2396).